Reading from the N-terminus, the 489-residue chain is Glutamyl-tRNA(Gln) amidotransferase subunit A (489 aa).

Catalysis depends on charge relay system residues Lys-79 and Ser-158. The Acyl-ester intermediate role is filled by Ser-182.

It belongs to the amidase family. GatA subfamily. In terms of assembly, heterotrimer of A, B and C subunits.

The enzyme catalyses L-glutamyl-tRNA(Gln) + L-glutamine + ATP + H2O = L-glutaminyl-tRNA(Gln) + L-glutamate + ADP + phosphate + H(+). Functionally, allows the formation of correctly charged Gln-tRNA(Gln) through the transamidation of misacylated Glu-tRNA(Gln) in organisms which lack glutaminyl-tRNA synthetase. The reaction takes place in the presence of glutamine and ATP through an activated gamma-phospho-Glu-tRNA(Gln). The protein is Glutamyl-tRNA(Gln) amidotransferase subunit A of Anaplasma marginale (strain Florida).